Consider the following 486-residue polypeptide: Glucose-6-phosphate 1-dehydrogenase (486 aa).

NADP(+) contacts are provided by residues 13–20 (GGTGDLAK), Arg47, 86–87 (DV), and Lys149. Substrate-binding residues include His179, Lys183, Glu217, and Asp236. Catalysis depends on His241, which acts as the Proton acceptor. Residues Lys339 and Lys344 each coordinate substrate.

The protein belongs to the glucose-6-phosphate dehydrogenase family. As to quaternary structure, homodimer.

The enzyme catalyses D-glucose 6-phosphate + NAD(+) = 6-phospho-D-glucono-1,5-lactone + NADH + H(+). It carries out the reaction D-glucose 6-phosphate + NADP(+) = 6-phospho-D-glucono-1,5-lactone + NADPH + H(+). It participates in carbohydrate degradation; pentose phosphate pathway; D-ribulose 5-phosphate from D-glucose 6-phosphate (oxidative stage): step 1/3. Its function is as follows. Catalyzes the oxidation of glucose 6-phosphate to 6-phosphogluconolactone. Can utilize either NADP(+) or NAD(+). The chain is Glucose-6-phosphate 1-dehydrogenase from Leuconostoc mesenteroides.